The following is a 321-amino-acid chain: Glucokinase (321 aa).

8 to 13 (GDVGGT) contributes to the ATP binding site.

The protein belongs to the bacterial glucokinase family.

Its subcellular location is the cytoplasm. It catalyses the reaction D-glucose + ATP = D-glucose 6-phosphate + ADP + H(+). This is Glucokinase from Shigella boydii serotype 18 (strain CDC 3083-94 / BS512).